Consider the following 643-residue polypeptide: Zinc finger protein 64 (643 aa).

11 C2H2-type zinc fingers span residues 173 to 195 (HKCE…MRCH), 201 to 223 (YKCK…LRIH), 229 to 251 (FKCQ…LRSH), 297 to 322 (FNCR…LRIH), 328 to 350 (HKCE…MRCH), 356 to 378 (HKCH…LRIH), 384 to 406 (YKCQ…LRSH), 412 to 434 (FQCW…MIVH), 440 to 463 (FKCE…RIKH), 465 to 487 (FKCL…SRLH), and 493 to 515 (EKCP…SRVH). Zn(2+) is bound by residues cysteine 495, cysteine 498, histidine 511, histidine 515, cysteine 523, cysteine 526, histidine 539, and histidine 544. Positions 538–552 (KHIDKVHREGAKTEN) are enriched in basic and acidic residues. The tract at residues 538-571 (KHIDKVHREGAKTENRAPPGKDGPGESGPHHVPN) is disordered. The C2H2-type 12 zinc-finger motif lies at 578–600 (FGCDKCGASFVRDDSLRCHRKQH).

It belongs to the krueppel C2H2-type zinc-finger protein family. As to quaternary structure, interacts with NOTCH1. Widely expressed. Expressed in the brain, spleen, liver, and heart.

The protein resides in the nucleus. Functionally, may be involved in the regulation of mesenchymal cell differentiation through transactivation of NOTCH1 target genes. The polypeptide is Zinc finger protein 64 (Mus musculus (Mouse)).